We begin with the raw amino-acid sequence, 195 residues long: 2-cysteine peroxiredoxin, chloroplastic (195 aa).

One can recognise a Thioredoxin domain in the interval 3–161 (IRVGQKAPDF…ALRTLQAIQY (159 aa)). Cysteine 49 serves as the catalytic Cysteine sulfenic acid (-SOH) intermediate.

It belongs to the peroxiredoxin family. AhpC/Prx1 subfamily. As to quaternary structure, homodimer; disulfide-linked, upon oxidation.

The protein localises to the plastid. The protein resides in the chloroplast. The catalysed reaction is a hydroperoxide + [thioredoxin]-dithiol = an alcohol + [thioredoxin]-disulfide + H2O. Its function is as follows. Thiol-specific peroxidase that catalyzes the reduction of hydrogen peroxide and organic hydroperoxides to water and alcohols, respectively. Plays a role in cell protection against oxidative stress by detoxifying peroxides. The polypeptide is 2-cysteine peroxiredoxin, chloroplastic (Chattonella marina var. antiqua (Red tide flagellate)).